Reading from the N-terminus, the 106-residue chain is Neisseria hypothetical transcription factor (106 aa).

Residues 26 to 80 form the HTH cro/C1-type domain; it reads MRLFRVNKGWSQEELARQCGLDRTYVSAVERKRWNIALSNIEKMAAALGVAAYQL. The segment at residues 37 to 56 is a DNA-binding region (H-T-H motif); the sequence is QEELARQCGLDRTYVSAVER.

Homodimer. Can interact with the dimeric form of the DNA mimic protein DMP19 with 1:1 stoichiometry.

The protein localises to the cytoplasm. Its activity is regulated as follows. Repressor activity is inhibited in the presence of the DNA mimic protein DMP19, which interacts with NHTF and prevents binding of NHTF to its DNA-binding sites. Functionally, transcriptional regulator probably involved in the response to nitrogen levels. Down-regulates its own expression as well as the expression of the downstream gene, glnD, which encodes the [Protein-PII] uridylyltransferase, a key enzyme in the nitrogen regulation system. Acts by binding to a specific palindromic DNA sequence (5'-TGTNANTNACA-3') in its 5'-untranslated region. This chain is Neisseria hypothetical transcription factor, found in Neisseria meningitidis serogroup B (strain ATCC BAA-335 / MC58).